The sequence spans 678 residues: Ribonuclease Z 2, mitochondrial (678 aa).

Residues Met-1–Arg-37 constitute a mitochondrion transit peptide.

This sequence belongs to the RNase Z family. Requires Zn(2+) as cofactor.

The protein resides in the mitochondrion. Its subcellular location is the cytoplasm. It catalyses the reaction Endonucleolytic cleavage of RNA, removing extra 3' nucleotides from tRNA precursor, generating 3' termini of tRNAs. A 3'-hydroxy group is left at the tRNA terminus and a 5'-phosphoryl group is left at the trailer molecule.. Its function is as follows. Zinc phosphodiesterase, which displays some tRNA 3'-processing endonuclease activity. May be involved in tRNA maturation, by removing a 3'-trailer from precursor tRNA. In Schizosaccharomyces pombe (strain 972 / ATCC 24843) (Fission yeast), this protein is Ribonuclease Z 2, mitochondrial (trz2).